Here is a 219-residue protein sequence, read N- to C-terminus: Octanoyltransferase (219 aa).

The BPL/LPL catalytic domain occupies 32–207; that stretch reads ADSGDEIWLL…HLVRQLGYAQ (176 aa). Substrate-binding positions include 71–78, 138–140, and 151–153; these read RGGQVTYH, SLG, and GLA. The Acyl-thioester intermediate role is filled by Cys-169.

The protein belongs to the LipB family.

Its subcellular location is the cytoplasm. The catalysed reaction is octanoyl-[ACP] + L-lysyl-[protein] = N(6)-octanoyl-L-lysyl-[protein] + holo-[ACP] + H(+). It participates in protein modification; protein lipoylation via endogenous pathway; protein N(6)-(lipoyl)lysine from octanoyl-[acyl-carrier-protein]: step 1/2. Catalyzes the transfer of endogenously produced octanoic acid from octanoyl-acyl-carrier-protein onto the lipoyl domains of lipoate-dependent enzymes. Lipoyl-ACP can also act as a substrate although octanoyl-ACP is likely to be the physiological substrate. This chain is Octanoyltransferase, found in Stutzerimonas stutzeri (strain A1501) (Pseudomonas stutzeri).